The primary structure comprises 172 residues: Immune protein Tsi1 (172 aa).

The N-terminal stretch at 1 to 19 (MKLLAGSFAALFLSLSAQA) is a signal peptide. Cystine bridges form between Cys-22–Cys-167, Cys-79–Cys-121, and Cys-147–Cys-155.

In terms of assembly, forms a heterotetramer with Tse1 consisting of two Tse1 dimers and two Tsi1 dimers. Formation of the complex inactivates Tse1 enzymatic activity.

Its function is as follows. Immunity protein that plays a role in preventing early activation of toxin Tse1. Binds to a large surface of Tse1 and thereby occludes the active site to specifically inhibits enzyme activity by forming a hydrogen bond with the catalytic diad. The sequence is that of Immune protein Tsi1 from Pseudomonas aeruginosa (strain ATCC 15692 / DSM 22644 / CIP 104116 / JCM 14847 / LMG 12228 / 1C / PRS 101 / PAO1).